The following is a 244-amino-acid chain: Inactive chemokine-binding protein (244 aa).

The segment at 1–79 (MHVPASLQQS…STSVEDVDPP (79 aa)) is disordered. The segment covering 37–53 (QDQTPTNDKICQSVTEI) has biased composition (polar residues). The segment covering 54 to 77 (TESESDPDPEVESEDDSTSVEDVD) has biased composition (acidic residues).

This sequence belongs to the orthopoxvirus OPG001 family.

The protein resides in the host cytoplasm. Its function is as follows. The protein is truncated in this vaccinal strain and presumably inactive, because the lack of signal peptide prevents the protein of being secreted. In the other strains inhibits host immune defense by binding to host chemokines. Binds host CC chemokines (beta chemokines) such as RANTES with high affinity, but not CXC or C chemokines (alpha and gamma chemokines). The sequence is that of Inactive chemokine-binding protein (OPG001) from Vaccinia virus (strain Copenhagen) (VACV).